The following is a 230-amino-acid chain: Transmembrane protein 221 (230 aa).

4 helical membrane-spanning segments follow: residues 12-32 (AMTLLGIPAAVLVALAAQLLF), 73-93 (ALAALAQVLGLSCLLLAALCG), 125-145 (LFCCGVSVYLAALAIYALLLF), and 147-167 (IEAGAAAASILGSGALILVAI). The disordered stretch occupies residues 184–230 (RELSPPSFEDEPARPSEDSKSGCRAQPPQDEETETPIGAVTHQGSHF). A compositionally biased stretch (basic and acidic residues) spans 194–204 (EPARPSEDSKS).

The protein resides in the membrane. This Mus musculus (Mouse) protein is Transmembrane protein 221 (Tmem221).